Here is a 278-residue protein sequence, read N- to C-terminus: uncharacterized protein (278 aa).

A compositionally biased stretch (basic and acidic residues) spans 1–16 (MFGLKVKDAQKDDQKS). Disordered stretches follow at residues 1-86 (MFGL…RGSN) and 98-126 (FGTTSSSESGQSGTQGSTPSNPGPWTPWL). Low complexity-rich tracts occupy residues 33–45 (QGTSTTTQRRGSS) and 99–117 (GTTSSSESGQSGTQGSTPS).

This sequence belongs to the adhesin P1 family.

This is an uncharacterized protein from Mycoplasma pneumoniae (strain ATCC 29342 / M129 / Subtype 1) (Mycoplasmoides pneumoniae).